The chain runs to 35 residues: Cecropin-A (35 aa).

L35 bears the Leucine amide mark.

As to quaternary structure, monomer. In terms of tissue distribution, hemolymph.

Its subcellular location is the secreted. In terms of biological role, cecropins have lytic and antibacterial activity against several Gram-positive and Gram-negative bacteria. Also has activity against fungi. This chain is Cecropin-A, found in Heliothis virescens (Tobacco budworm moth).